A 494-amino-acid chain; its full sequence is Amidophosphoribosyltransferase (494 aa).

Residues 1 to 10 (MFNYSGLNEE) constitute a propeptide that is removed on maturation. Residue cysteine 11 is the Nucleophile of the active site. Residues 11-231 (CGVFGIWNHP…AGEYVVINDK (221 aa)) form the Glutamine amidotransferase type-2 domain. Mg(2+)-binding residues include serine 294, aspartate 356, and aspartate 357.

In the C-terminal section; belongs to the purine/pyrimidine phosphoribosyltransferase family. It depends on Mg(2+) as a cofactor.

The enzyme catalyses 5-phospho-beta-D-ribosylamine + L-glutamate + diphosphate = 5-phospho-alpha-D-ribose 1-diphosphate + L-glutamine + H2O. It participates in purine metabolism; IMP biosynthesis via de novo pathway; N(1)-(5-phospho-D-ribosyl)glycinamide from 5-phospho-alpha-D-ribose 1-diphosphate: step 1/2. Its function is as follows. Catalyzes the formation of phosphoribosylamine from phosphoribosylpyrophosphate (PRPP) and glutamine. The chain is Amidophosphoribosyltransferase from Staphylococcus aureus (strain MRSA252).